The primary structure comprises 201 residues: Large ribosomal subunit protein bL25 (201 aa).

Belongs to the bacterial ribosomal protein bL25 family. CTC subfamily. Part of the 50S ribosomal subunit; part of the 5S rRNA/L5/L18/L25 subcomplex. Contacts the 5S rRNA. Binds to the 5S rRNA independently of L5 and L18.

In terms of biological role, this is one of the proteins that binds to the 5S RNA in the ribosome where it forms part of the central protuberance. The protein is Large ribosomal subunit protein bL25 of Aromatoleum aromaticum (strain DSM 19018 / LMG 30748 / EbN1) (Azoarcus sp. (strain EbN1)).